We begin with the raw amino-acid sequence, 149 residues long: Nucleoside diphosphate kinase (149 aa).

ATP is bound by residues lysine 9, phenylalanine 57, arginine 85, threonine 91, arginine 102, and asparagine 112. Residue histidine 115 is the Pros-phosphohistidine intermediate of the active site.

It belongs to the NDK family. Mg(2+) is required as a cofactor.

It localises to the cytoplasm. The enzyme catalyses a 2'-deoxyribonucleoside 5'-diphosphate + ATP = a 2'-deoxyribonucleoside 5'-triphosphate + ADP. The catalysed reaction is a ribonucleoside 5'-diphosphate + ATP = a ribonucleoside 5'-triphosphate + ADP. Functionally, major role in the synthesis of nucleoside triphosphates other than ATP. The ATP gamma phosphate is transferred to the NDP beta phosphate via a ping-pong mechanism, using a phosphorylated active-site intermediate. This Methanosarcina barkeri (strain Fusaro / DSM 804) protein is Nucleoside diphosphate kinase.